The primary structure comprises 344 residues: Arginase 2, chloroplastic/mitochondrial (344 aa).

The N-terminal 26 residues, 1–26 (MWKIGQRGVPYFQRLIAAPFTTLRSL), are a transit peptide targeting the chloroplast and mitochondrion. Mn(2+) is bound by residues His163, Asp187, His189, and Asp191. Residues 189–193 (HPDIY), 197–199 (EGN), and Asn228 each bind substrate. Residues Asp272 and Asp274 each contribute to the Mn(2+) site. Substrate is bound at residue Glu315.

Belongs to the arginase family. The cofactor is Mn(2+). As to expression, expressed in vasculature of roots, root tips, leaves and cotyledons.

The protein localises to the mitochondrion. Its subcellular location is the plastid. It localises to the chloroplast. It carries out the reaction L-arginine + H2O = urea + L-ornithine. It catalyses the reaction agmatine + H2O = urea + putrescine. The protein operates within nitrogen metabolism; urea cycle; L-ornithine and urea from L-arginine: step 1/1. Its pathway is amine and polyamine biosynthesis; putrescine biosynthesis via agmatine pathway; putrescine from agmatine: step 1/1. Its function is as follows. Catalyzes the hydrolysis of L-arginine to urea and L-ornithine. The latter can be utilized in the urea cycle or as a precursor for the synthesis of both polyamines and proline. Possesses agmatinase activity. Catalyzes the formation of putrescine from agmatine. This Arabidopsis thaliana (Mouse-ear cress) protein is Arginase 2, chloroplastic/mitochondrial (ARGAH2).